The chain runs to 1345 residues: Aldehyde oxidase 2 (1345 aa).

A 2Fe-2S ferredoxin-type domain is found at Asp9 to Val96. Residues Cys48, Cys53, Cys56, and Cys78 each coordinate [2Fe-2S] cluster. Gln117 is a binding site for Mo-molybdopterin. [2Fe-2S] cluster-binding residues include Cys118, Cys121, Cys153, and Cys155. Cys155 contacts Mo-molybdopterin. The 186-residue stretch at Phe238–Lys423 folds into the FAD-binding PCMH-type domain. FAD is bound by residues Leu266–Leu273, Ala347, Ser356, His360, Asp369, and Leu413. Mo-molybdopterin contacts are provided by residues Gly812–Phe813, Ala1094–Gly1097, Gln1209, and Leu1274. The Proton acceptor; for azaheterocycle hydroxylase activity role is filled by Glu1276.

This sequence belongs to the xanthine dehydrogenase family. As to quaternary structure, homodimer. Requires [2Fe-2S] cluster as cofactor. FAD is required as a cofactor. Mo-molybdopterin serves as cofactor. As to expression, expressed in olfactory mucosa epithelium (at protein level). Detected in skin.

Its subcellular location is the cytoplasm. The catalysed reaction is an aldehyde + O2 + H2O = a carboxylate + H2O2 + H(+). Its function is as follows. Oxidase with broad substrate specificity, oxidizing aromatic azaheterocycles, such as phthalazine, as well as aldehydes, such as benzaldehyde and retinal. Cannot use hypoxanthine as substrate. The polypeptide is Aldehyde oxidase 2 (Aox2) (Mus musculus (Mouse)).